The chain runs to 187 residues: Protein P18, mitochondrial (187 aa).

A mitochondrion-targeting transit peptide spans 1 to 17 (MRRLSSQLMCTAAAVRF). Residues 160 to 187 (NAAKAKADGKEHPSTLAQQQSLFDIKIQ) form a disordered region.

The protein localises to the mitochondrion inner membrane. Putative RNA-binding protein. In Leishmania tarentolae (Sauroleishmania tarentolae), this protein is Protein P18, mitochondrial.